The chain runs to 147 residues: Large ribosomal subunit protein uL13 (147 aa).

The protein belongs to the universal ribosomal protein uL13 family. In terms of assembly, part of the 50S ribosomal subunit.

Its function is as follows. This protein is one of the early assembly proteins of the 50S ribosomal subunit, although it is not seen to bind rRNA by itself. It is important during the early stages of 50S assembly. The sequence is that of Large ribosomal subunit protein uL13 from Micrococcus luteus (strain ATCC 4698 / DSM 20030 / JCM 1464 / CCM 169 / CCUG 5858 / IAM 1056 / NBRC 3333 / NCIMB 9278 / NCTC 2665 / VKM Ac-2230) (Micrococcus lysodeikticus).